The sequence spans 245 residues: DNA polymerase sliding clamp 1 (245 aa).

It belongs to the PCNA family. As to quaternary structure, homotrimer. The subunits circularize to form a toroid; DNA passes through its center. Replication factor C (RFC) is required to load the toroid on the DNA.

Its function is as follows. Sliding clamp subunit that acts as a moving platform for DNA processing. Responsible for tethering the catalytic subunit of DNA polymerase and other proteins to DNA during high-speed replication. This Sulfurisphaera ohwakuensis protein is DNA polymerase sliding clamp 1.